Reading from the N-terminus, the 222-residue chain is Putative adhesin RP828 (222 aa).

Residues 1 to 22 (MKKLLLIATASATILSSSVSFA) form the signal peptide.

Functionally, adheres to biotinylated epithelial (Vero cell) proteins. The chain is Putative adhesin RP828 from Rickettsia prowazekii (strain Madrid E).